Consider the following 145-residue polypeptide: uncharacterized protein (145 aa).

The protein to R.meliloti R00649.

This is an uncharacterized protein from Agrobacterium fabrum (strain C58 / ATCC 33970) (Agrobacterium tumefaciens (strain C58)).